Here is a 297-residue protein sequence, read N- to C-terminus: 4-hydroxy-tetrahydrodipicolinate synthase (297 aa).

Position 46 (Thr46) interacts with pyruvate. The Proton donor/acceptor role is filled by Tyr134. Catalysis depends on Lys163, which acts as the Schiff-base intermediate with substrate. Ile205 lines the pyruvate pocket.

Belongs to the DapA family. As to quaternary structure, homotetramer; dimer of dimers.

It is found in the cytoplasm. It carries out the reaction L-aspartate 4-semialdehyde + pyruvate = (2S,4S)-4-hydroxy-2,3,4,5-tetrahydrodipicolinate + H2O + H(+). It functions in the pathway amino-acid biosynthesis; L-lysine biosynthesis via DAP pathway; (S)-tetrahydrodipicolinate from L-aspartate: step 3/4. Catalyzes the condensation of (S)-aspartate-beta-semialdehyde [(S)-ASA] and pyruvate to 4-hydroxy-tetrahydrodipicolinate (HTPA). The protein is 4-hydroxy-tetrahydrodipicolinate synthase of Thermoanaerobacter pseudethanolicus (strain ATCC 33223 / 39E) (Clostridium thermohydrosulfuricum).